A 126-amino-acid chain; its full sequence is Autophagy-related protein 8-like protein DDB_G0290491 (126 aa).

Glycine 123 is lipidated: Phosphatidylethanolamine amidated glycine. A propeptide spans 124–126 (SDI) (removed in mature form).

Belongs to the ATG8 family.

Its subcellular location is the membrane. This Dictyostelium discoideum (Social amoeba) protein is Autophagy-related protein 8-like protein DDB_G0290491.